Here is a 281-residue protein sequence, read N- to C-terminus: Peptidyl-prolyl cis-trans isomerase CYP28, chloroplastic (281 aa).

The transit peptide at 1–24 (MASSSILIPPILTRRNLLLSTTIA) directs the protein to the chloroplast. Residues 66–268 (STTPCSDSTP…KTVFISGCGE (203 aa)) form the PPIase cyclophilin-type domain.

The protein belongs to the cyclophilin-type PPIase family. S-nytrosylated during the hypersensitive disease resistance response. In terms of tissue distribution, ubiquitous. Not detected in roots.

It localises to the plastid. The protein resides in the chloroplast. It catalyses the reaction [protein]-peptidylproline (omega=180) = [protein]-peptidylproline (omega=0). Functionally, PPIases accelerate the folding of proteins. It catalyzes the cis-trans isomerization of proline imidic peptide bonds in oligopeptides. The sequence is that of Peptidyl-prolyl cis-trans isomerase CYP28, chloroplastic (CYP28) from Arabidopsis thaliana (Mouse-ear cress).